Here is a 478-residue protein sequence, read N- to C-terminus: DNA-directed RNA polymerase II subunit RPB1 (478 aa).

Residues C68, C71, C78, H81, C108, C111, and C149 each coordinate Zn(2+). Mg(2+) is bound by residues D474 and D476.

It belongs to the RNA polymerase beta' chain family. In terms of assembly, component of the RNA polymerase II (Pol II) complex consisting of 12 subunits. In terms of processing, phosphorylation activates POL II.

It is found in the nucleus. The enzyme catalyses RNA(n) + a ribonucleoside 5'-triphosphate = RNA(n+1) + diphosphate. DNA-dependent RNA polymerase catalyzes the transcription of DNA into RNA using the four ribonucleoside triphosphates as substrates. Largest and catalytic component of RNA polymerase II which synthesizes mRNA precursors and many functional non-coding RNAs. Forms the polymerase active center together with the second largest subunit. Pol II is the central component of the basal RNA polymerase II transcription machinery. It is composed of mobile elements that move relative to each other. RPB1 is part of the core element with the central large cleft, the clamp element that moves to open and close the cleft and the jaws that are thought to grab the incoming DNA template. At the start of transcription, a single-stranded DNA template strand of the promoter is positioned within the central active site cleft of Pol II. A bridging helix emanates from RPB1 and crosses the cleft near the catalytic site and is thought to promote translocation of Pol II by acting as a ratchet that moves the RNA-DNA hybrid through the active site by switching from straight to bent conformations at each step of nucleotide addition. During transcription elongation, Pol II moves on the template as the transcript elongates. Elongation is influenced by the phosphorylation status of the C-terminal domain (CTD) of Pol II largest subunit (RPB1), which serves as a platform for assembly of factors that regulate transcription initiation, elongation, termination and mRNA processing. This is DNA-directed RNA polymerase II subunit RPB1 (RPB1) from Euplotoides octocarinatus (Freshwater ciliate).